Consider the following 340-residue polypeptide: Dihydroorotate dehydrogenase (quinone) (340 aa).

FMN-binding positions include 61–65 (AGLDK) and T85. K65 contacts substrate. 110–114 (NRMGF) contacts substrate. N138 and N171 together coordinate FMN. Residue N171 participates in substrate binding. S174 acts as the Nucleophile in catalysis. Residue N176 coordinates substrate. FMN-binding residues include K216 and T244. Residue 245-246 (NT) coordinates substrate. FMN-binding positions include G267, G296, and 317–318 (YT).

Belongs to the dihydroorotate dehydrogenase family. Type 2 subfamily. As to quaternary structure, monomer. FMN serves as cofactor.

The protein resides in the cell membrane. It catalyses the reaction (S)-dihydroorotate + a quinone = orotate + a quinol. Its pathway is pyrimidine metabolism; UMP biosynthesis via de novo pathway; orotate from (S)-dihydroorotate (quinone route): step 1/1. Catalyzes the conversion of dihydroorotate to orotate with quinone as electron acceptor. The polypeptide is Dihydroorotate dehydrogenase (quinone) (Marinobacter nauticus (strain ATCC 700491 / DSM 11845 / VT8) (Marinobacter aquaeolei)).